The sequence spans 179 residues: B-cell acute lymphoblastic leukemia-expressed protein (179 aa).

Disordered stretches follow at residues 1 to 20 (MMKDIIPASSWASEESTDLQ) and 65 to 86 (RDTPPPVTSPRGDGICVSRGKA). The span at 10 to 20 (SWASEESTDLQ) shows a compositional bias: polar residues.

The sequence is that of B-cell acute lymphoblastic leukemia-expressed protein (BLACE) from Homo sapiens (Human).